A 239-amino-acid chain; its full sequence is Diablo IAP-binding mitochondrial protein (239 aa).

The transit peptide at 1–21 (MAALKSWLSRSVTSFFRYRQC) directs the protein to the mitochondrion. The IAP-binding signature appears at 56–60 (AVPIA). Positions 217 to 239 (RQKTQEEGEERAESEQEAYLRED) are disordered.

The protein belongs to the Smac/DIABLO protein family. As to quaternary structure, homodimer. Interacts with BIRC2/c-IAP1 (via BIR3 domain). Interacts with BIRC6/BRUCE; inhibits BIRC6 activity. Interacts with BIRC7/livin. Interacts with XIAP/BIRC4 (via BIR3 domain). Interacts with the monomeric and dimeric form of BIRC5/survivin. Interacts with AREL1 (via HECT domain); in the cytoplasm following induction of apoptosis. Interacts with BEX3. Ubiquitinated by BIRC7/livin. Ubiquitinated by BIRC6. In terms of processing, the precursor form is proteolytically cleaved by mitochondrial processing peptidase MPP to remove the transit peptide and produce an intermediate form. This is then processed by PARL to produce the mature cleaved form which is released from mitochondria into the cytosol in apoptotic cells. Ubiquitously expressed with highest expression in testis. Expression is also high in heart, liver, kidney, spleen, prostate and ovary. Low in brain, lung, thymus and peripheral blood leukocytes. Isoform 3 is ubiquitously expressed.

The protein localises to the mitochondrion. It is found in the cytoplasm. It localises to the cytosol. In terms of biological role, promotes apoptosis by activating caspases in the cytochrome c/Apaf-1/caspase-9 pathway. Acts by opposing the inhibitory activity of inhibitor of apoptosis proteins (IAP). Inhibits the activity of BIRC6/BRUCE by inhibiting its binding to caspases. Its function is as follows. Attenuates the stability and apoptosis-inhibiting activity of XIAP/BIRC4 by promoting XIAP/BIRC4 ubiquitination and degradation through the ubiquitin-proteasome pathway. Also disrupts XIAP/BIRC4 interacting with processed caspase-9 and promotes caspase-3 activation. Defective in the capacity to down-regulate the XIAP/BIRC4 abundance. This Homo sapiens (Human) protein is Diablo IAP-binding mitochondrial protein.